A 207-amino-acid chain; its full sequence is uncharacterized protein (207 aa).

It belongs to the methyltransferase superfamily.

This is an uncharacterized protein from Escherichia coli (strain K12).